The primary structure comprises 122 residues: Small ribosomal subunit protein uS13 (122 aa).

The disordered stretch occupies residues 99-122; it reads RGQRTHTNARTRKGPAKAIAGKKK.

Belongs to the universal ribosomal protein uS13 family. In terms of assembly, part of the 30S ribosomal subunit. Forms a loose heterodimer with protein S19. Forms two bridges to the 50S subunit in the 70S ribosome.

Located at the top of the head of the 30S subunit, it contacts several helices of the 16S rRNA. In the 70S ribosome it contacts the 23S rRNA (bridge B1a) and protein L5 of the 50S subunit (bridge B1b), connecting the 2 subunits; these bridges are implicated in subunit movement. Contacts the tRNAs in the A and P-sites. This Sinorhizobium fredii (strain NBRC 101917 / NGR234) protein is Small ribosomal subunit protein uS13.